We begin with the raw amino-acid sequence, 43 residues long: Iota-conotoxin-like S11.2 (43 aa).

4 cysteine pairs are disulfide-bonded: C2–C16, C9–C19, C15–C24, and C18–C35. M41 bears the D-methionine mark. A propeptide (removed by a carboxypeptidase) is located at residue R43.

The protein belongs to the conotoxin I1 superfamily. Expressed by the venom duct.

The protein localises to the secreted. Its function is as follows. Iota-conotoxins bind to voltage-gated sodium channels (Nav) and act as agonists by shifting the voltage-dependence of activation to more hyperpolarized levels. Produces general excitatory symptoms. In Conus striatus (Striated cone), this protein is Iota-conotoxin-like S11.2.